The following is a 317-amino-acid chain: MNDMTPPVPRRSVSEIEALFALPFADLMYQAQGVHRAHFDPNRIQLSTLLSIKTGGCSEDCGYCPQSVHYDAGVESQGLLDLGDVLKAARAAKDAGASRFCMGAAWRGPKQRELEPVLAMVREVKALGLETCATLGMLKDGQAEQLKEAGLDYYNHNLDTAPEFYGEIITTRDYQDRLDTLERVRRADLHVCCGGIVGMGESRTQRAGLIAQLAALDPQPESVPINLLVRVEGTPLAETEALEPLEFVRTIAVTRLCMPKSFVRLSAGRQQMSDAVQALCFLAGANSIFYGEKLLTTGNPEWERDQRLFDSLGVTAL.

The Radical SAM core domain occupies 42 to 260 (NRIQLSTLLS…IAVTRLCMPK (219 aa)). 3 residues coordinate [4Fe-4S] cluster: Cys57, Cys61, and Cys64. Residues Cys101, Cys132, Cys192, and Arg264 each coordinate [2Fe-2S] cluster.

It belongs to the radical SAM superfamily. Biotin synthase family. Homodimer. [4Fe-4S] cluster is required as a cofactor. [2Fe-2S] cluster serves as cofactor.

It carries out the reaction (4R,5S)-dethiobiotin + (sulfur carrier)-SH + 2 reduced [2Fe-2S]-[ferredoxin] + 2 S-adenosyl-L-methionine = (sulfur carrier)-H + biotin + 2 5'-deoxyadenosine + 2 L-methionine + 2 oxidized [2Fe-2S]-[ferredoxin]. The protein operates within cofactor biosynthesis; biotin biosynthesis; biotin from 7,8-diaminononanoate: step 2/2. Catalyzes the conversion of dethiobiotin (DTB) to biotin by the insertion of a sulfur atom into dethiobiotin via a radical-based mechanism. The chain is Biotin synthase from Thiobacillus denitrificans (strain ATCC 25259 / T1).